Consider the following 534-residue polypeptide: Glucans biosynthesis protein D (534 aa).

A signal peptide (tat-type signal) is located at residues 1–30; that stretch reads MRMQRRHLLKNAAAALAALGLPALPQWALA.

Belongs to the OpgD/OpgG family. In terms of processing, predicted to be exported by the Tat system. The position of the signal peptide cleavage has not been experimentally proven.

Its subcellular location is the periplasm. It participates in glycan metabolism; osmoregulated periplasmic glucan (OPG) biosynthesis. Its function is as follows. Probably involved in the control of the structural glucose backbone of osmoregulated periplasmic glucans (OPGs). The sequence is that of Glucans biosynthesis protein D from Xanthomonas oryzae pv. oryzae (strain PXO99A).